The primary structure comprises 230 residues: MEKKDEGNPPMAVMGSRDENEDVKSTMRTAETMLRLVPVALCVSALVVMLKNTQTNDYGSLSYSDLGAFRYLVNANGICAGYSLLSAVIVAMPRAWTMPQAWTFFLLDQVLTYVILAAGTVSTEVLYLANKGDTSIAWSAACASFGGFCHKALISTVITFVAVIFYAALSLVSSYKLFSKYDAPVVTQSGEGIKTVTLGSPPPPPPPPPSNLHLHLHAKLACPAHNNSPN.

Residues 1-23 (MEKKDEGNPPMAVMGSRDENEDV) form a disordered region. The Cytoplasmic portion of the chain corresponds to 1–29 (MEKKDEGNPPMAVMGSRDENEDVKSTMRT). A helical membrane pass occupies residues 30–50 (AETMLRLVPVALCVSALVVML). Topologically, residues 51–71 (KNTQTNDYGSLSYSDLGAFRY) are extracellular. The chain crosses the membrane as a helical span at residues 72-92 (LVNANGICAGYSLLSAVIVAM). The Cytoplasmic segment spans residues 93 to 100 (PRAWTMPQ). A helical membrane pass occupies residues 101-121 (AWTFFLLDQVLTYVILAAGTV). Residues 122-151 (STEVLYLANKGDTSIAWSAACASFGGFCHK) are Extracellular-facing. The chain crosses the membrane as a helical span at residues 152 to 172 (ALISTVITFVAVIFYAALSLV). At 173–230 (SSYKLFSKYDAPVVTQSGEGIKTVTLGSPPPPPPPPPSNLHLHLHAKLACPAHNNSPN) the chain is on the cytoplasmic side.

This sequence belongs to the Casparian strip membrane proteins (CASP) family. Homodimer and heterodimers.

It is found in the cell membrane. This is CASP-like protein 2A2 from Populus trichocarpa (Western balsam poplar).